The chain runs to 283 residues: Pantothenate synthetase 1 (283 aa).

30–37 (MGYLHDGH) is an ATP binding site. H37 serves as the catalytic Proton donor. Residue Q61 coordinates (R)-pantoate. Position 61 (Q61) interacts with beta-alanine. 147 to 150 (GQKD) contributes to the ATP binding site. Q153 contributes to the (R)-pantoate binding site. ATP-binding positions include V176 and 184–187 (MSSR).

It belongs to the pantothenate synthetase family. In terms of assembly, homodimer.

It localises to the cytoplasm. The catalysed reaction is (R)-pantoate + beta-alanine + ATP = (R)-pantothenate + AMP + diphosphate + H(+). It functions in the pathway cofactor biosynthesis; (R)-pantothenate biosynthesis; (R)-pantothenate from (R)-pantoate and beta-alanine: step 1/1. Its function is as follows. Catalyzes the condensation of pantoate with beta-alanine in an ATP-dependent reaction via a pantoyl-adenylate intermediate. This chain is Pantothenate synthetase 1, found in Bradyrhizobium diazoefficiens (strain JCM 10833 / BCRC 13528 / IAM 13628 / NBRC 14792 / USDA 110).